We begin with the raw amino-acid sequence, 250 residues long: Ribosomal RNA small subunit methyltransferase J (250 aa).

Residues 101 to 102 (RD), 117 to 118 (ER), 153 to 154 (SS), and Asp-171 contribute to the S-adenosyl-L-methionine site.

This sequence belongs to the methyltransferase superfamily. RsmJ family.

The protein localises to the cytoplasm. The enzyme catalyses guanosine(1516) in 16S rRNA + S-adenosyl-L-methionine = N(2)-methylguanosine(1516) in 16S rRNA + S-adenosyl-L-homocysteine + H(+). Specifically methylates the guanosine in position 1516 of 16S rRNA. This is Ribosomal RNA small subunit methyltransferase J from Shigella flexneri serotype 5b (strain 8401).